The primary structure comprises 687 residues: SLCO1B3-SLCO1B7 readthrough transcript protein (687 aa).

Residues 1–29 lie on the Cytoplasmic side of the membrane; it reads MDQHQHLNKTAESASSEKKKTRRCNGFKM. The chain crosses the membrane as a helical span at residues 30–50; sequence FLAALSFSYIAKALGGIIMKI. The Extracellular portion of the chain corresponds to 51–63; sequence SITQIERRFDISS. A helical transmembrane segment spans residues 64 to 84; sequence SLAGLIDGSFEIGNLLVIVFV. Over 85 to 96 the chain is Cytoplasmic; the sequence is SYFGSKLHRPKL. Residues 97 to 117 traverse the membrane as a helical segment; the sequence is IGIGCLLMGTGSILTSLPHFF. Residues 118–170 lie on the Extracellular side of the membrane; sequence MGYYRYSKETNIDPSENSTSNLPNCLINQMLSLNRTPSEIIERGCVKESGSHM. N-linked (GlcNAc...) asparagine glycans are attached at residues Asn134 and Asn151. Residues 171–191 traverse the membrane as a helical segment; the sequence is WIYVFMGNMLRGIGETPIVPL. The Cytoplasmic segment spans residues 192–206; sequence GISYIDDFAKEGHSS. The helical transmembrane segment at 207-227 threads the bilayer; the sequence is LYLGTVNVMGMTGLVFAFMLG. Residues 228–258 lie on the Extracellular side of the membrane; that stretch reads SLFAKMYVDIGYVDLSTIRITPKDSRWVGAW. Residues 259–279 traverse the membrane as a helical segment; that stretch reads WLGFLVSGIVSIISSIPFFFL. The Cytoplasmic portion of the chain corresponds to 280–339; the sequence is PLNPNKPQKERKVSLFLHVLKTNDKRNQIANLTNRRKYITKNVTGFFQSLKSILTNPLYV. Residues 340–360 traverse the membrane as a helical segment; it reads IFVIFTLLHMSSYIASLTYII. The Extracellular portion of the chain corresponds to 361 to 376; that stretch reads KMVEQQYGWSASKTNF. A helical transmembrane segment spans residues 377–397; that stretch reads LLGVLALPAVAIGMFSGGYII. At 398–409 the chain is on the cytoplasmic side; sequence KKFKLSLVGLAK. The helical transmembrane segment at 410–430 threads the bilayer; sequence LAFCSATVHLLSQVLYFFLIC. The Extracellular portion of the chain corresponds to 431-539; the sequence is ESKSVAGLTL…CTRKSYVYFV (109 aa). The Kazal-like domain occupies 453–508; it reads DVPLSYCNSECNCDESQWEPVCGNNGITYLSPCLAGCKSSSGNKEPIVFYNCSCVE. 3 cysteine pairs are disulfide-bonded: Cys459–Cys489, Cys465–Cys485, and Cys474–Cys506. Asn503 and Asn516 each carry an N-linked (GlcNAc...) asparagine glycan. A helical membrane pass occupies residues 540-560; that stretch reads IQVLDAFLCAVGLTSYSVLVI. The Cytoplasmic segment spans residues 561–568; that stretch reads RIVQPELK. A helical membrane pass occupies residues 569 to 589; it reads ALAIGFHSMIMRSLGGILVPI. Topologically, residues 590–624 are extracellular; the sequence is YFGALIDTTCMKWSTNSCGARGACRIYNSTYLGRA. Asn617 is a glycosylation site (N-linked (GlcNAc...) asparagine). A helical membrane pass occupies residues 625–645; sequence FFGLKVALIFPVLVLLTVFIF. Residues 646-687 lie on the Cytoplasmic side of the membrane; it reads VVRKKSHGKDTKVLENERQVMDEANLEFLNDSEHFVPSAEEQ.

The protein belongs to the organo anion transporter (TC 2.A.60) family. As to expression, expressed in the perivenular areas (centrilobular) of the liver (at protein level).

Its subcellular location is the smooth endoplasmic reticulum membrane. It localises to the cell membrane. The protein resides in the endoplasmic reticulum membrane. The enzyme catalyses 17beta-estradiol 17-O-(beta-D-glucuronate)(out) = 17beta-estradiol 17-O-(beta-D-glucuronate)(in). It carries out the reaction dehydroepiandrosterone 3-sulfate(out) = dehydroepiandrosterone 3-sulfate(in). The catalysed reaction is taurocholate(out) = taurocholate(in). It catalyses the reaction lithocholate(out) = lithocholate(in). With respect to regulation, transport activity is induced by farnesoid X receptor (FXR) agonists such as chenodeoxycholate. Functionally, mediates the Na(+)-independent uptake of organic anions. Transports the conjugated steroids 17-beta-glucuronosyl estradiol (17beta-estradiol 17-O-(beta-D-glucuronate) or E2G) and dehydroepiandrosterone 3-sulfate (DHEAS) at the smooth endoplasmic reticulum membrane (SER), granting access to metabolizing enzymes. Contributes to the metabolism of bile acids such as taurocholate (cholyltaurine) and lithocholate, by functioning as a doorway between SER and cytosol, thereby decreasing their circulating levels and protecting the organism from their detergent properties. Regulates access or exit of drugs to the SER lumen. The chain is SLCO1B3-SLCO1B7 readthrough transcript protein from Homo sapiens (Human).